A 370-amino-acid chain; its full sequence is Anhydro-N-acetylmuramic acid kinase (370 aa).

Residue 13–20 (GTSMDGID) participates in ATP binding.

This sequence belongs to the anhydro-N-acetylmuramic acid kinase family.

It catalyses the reaction 1,6-anhydro-N-acetyl-beta-muramate + ATP + H2O = N-acetyl-D-muramate 6-phosphate + ADP + H(+). Its pathway is amino-sugar metabolism; 1,6-anhydro-N-acetylmuramate degradation. The protein operates within cell wall biogenesis; peptidoglycan recycling. Catalyzes the specific phosphorylation of 1,6-anhydro-N-acetylmuramic acid (anhMurNAc) with the simultaneous cleavage of the 1,6-anhydro ring, generating MurNAc-6-P. Is required for the utilization of anhMurNAc either imported from the medium or derived from its own cell wall murein, and thus plays a role in cell wall recycling. The chain is Anhydro-N-acetylmuramic acid kinase from Rhizobium etli (strain ATCC 51251 / DSM 11541 / JCM 21823 / NBRC 15573 / CFN 42).